Reading from the N-terminus, the 332-residue chain is 2,7-dihydroxy-5-methyl-1-naphthoate 7-O-methyltransferase (332 aa).

Arg-11 lines the substrate pocket. Residues Trp-133, His-153, 175-179, Gly-177, Asp-200, 227-228, and 242-243 each bind S-adenosyl-L-methionine; these read DVGGG, SF, and SA. The Proton acceptor role is filled by His-246. Asp-247 contacts substrate.

The protein belongs to the class I-like SAM-binding methyltransferase superfamily. Cation-independent O-methyltransferase family.

The enzyme catalyses 2,7-dihydroxy-5-methyl-1-naphthoate + S-adenosyl-L-methionine = 2-hydroxy-7-methoxy-5-methyl-1-naphthoate + S-adenosyl-L-homocysteine + H(+). Its pathway is antibiotic biosynthesis. Functionally, S-adenosyl-L-methionine-dependent O-methyltransferase that catalyzes regiospecific methylation at the 7-hydroxy group of 2,7-dihydroxy-5-methyl-1-naphthoate in the biosynthesis of the naphthoate moiety of the neocarzinostatin chromophore. Also recognizes other dihydroxynaphthoate as substrates and catalyzes their regiospecific O-methylation. The carboxylate and its ortho-hydroxy groups of the substrate appear to be crucial for NcsB1 substrate recognition and binding, and O-methylation takes place only at the free hydroxy group of these dihydroxynaphthoic acids. The protein is 2,7-dihydroxy-5-methyl-1-naphthoate 7-O-methyltransferase of Streptomyces carzinostaticus.